The following is a 141-amino-acid chain: Hemoglobin subunit alpha-1/2 (141 aa).

Residues 1-141 enclose the Globin domain; the sequence is VLSAABKSBV…VSTVLTSKYR (141 aa). The residue at position 3 (serine 3) is a Phosphoserine. An N6-succinyllysine mark is found at lysine 7 and lysine 11. Lysine 16 carries the post-translational modification N6-acetyllysine; alternate. An N6-succinyllysine; alternate modification is found at lysine 16. Residue tyrosine 24 is modified to Phosphotyrosine. The residue at position 35 (serine 35) is a Phosphoserine. Lysine 40 is modified (N6-succinyllysine). Position 49 is a phosphoserine (serine 49). Histidine 58 is a binding site for O2. Histidine 87 contributes to the heme b binding site. A Phosphoserine modification is found at serine 102. Threonine 108 is subject to Phosphothreonine. Residue serine 124 is modified to Phosphoserine. A phosphothreonine mark is found at threonine 134 and threonine 137. Position 138 is a phosphoserine (serine 138).

This sequence belongs to the globin family. Heterotetramer of two alpha chains and two beta chains. Red blood cells.

Functionally, involved in oxygen transport from the lung to the various peripheral tissues. The protein is Hemoglobin subunit alpha-1/2 of Odocoileus virginianus virginianus (Virginia white-tailed deer).